The chain runs to 341 residues: MSKANVGINGFGRIGRLVLRAAVEKDTVQVVAVNDPFITIDYMVYLFKYDSTHGQFKGTVTYDGDFLIVQKDGKSSHKIKVFNSKDPAAIAWGSVKADFVVESTGVFTTKEKASAHLQGGAKKVIISAPSADAPMYVVGVNHEKYDASNDHVVSNASCTTNCLAPLAKVINDNFGIIEGLMTTVHAVTATQKTVDGPSGKLWRDGRGAGQNIIPASTGAAKAVGKVIPELNGKLTGMAFRVPTPDVSVVDLTVRLEKPASMDDIKKVVKAAADGPMKGILAYTEDQVVSTDFVSDPHSSIFDAGACISLNPNFVKLVSWYDNEYGYSNRVVDLIGYIATRG.

NAD(+)-binding positions include 13–14 (RI), aspartate 35, and lysine 85. D-glyceraldehyde 3-phosphate contacts are provided by residues 157–159 (SCT), threonine 188, 217–218 (TG), and arginine 240. Cysteine 158 serves as the catalytic Nucleophile. Asparagine 322 is a binding site for NAD(+).

Belongs to the glyceraldehyde-3-phosphate dehydrogenase family. In terms of assembly, homotetramer.

Its subcellular location is the cytoplasm. It catalyses the reaction D-glyceraldehyde 3-phosphate + phosphate + NAD(+) = (2R)-3-phospho-glyceroyl phosphate + NADH + H(+). It functions in the pathway carbohydrate degradation; glycolysis; pyruvate from D-glyceraldehyde 3-phosphate: step 1/5. The protein is Glyceraldehyde-3-phosphate dehydrogenase 1 (gpd-1) of Caenorhabditis elegans.